Reading from the N-terminus, the 476-residue chain is Thymidine phosphorylase (476 aa).

The segment covering 1–11 (MAAPGTPPPLA) has biased composition (pro residues). The tract at residues 1-26 (MAAPGTPPPLAPETAGADSGGGSGEH) is disordered. 2 positions are modified to phosphothreonine: Thr-6 and Thr-475.

This sequence belongs to the thymidine/pyrimidine-nucleoside phosphorylase family. Homodimer.

It carries out the reaction thymidine + phosphate = 2-deoxy-alpha-D-ribose 1-phosphate + thymine. The protein operates within pyrimidine metabolism; dTMP biosynthesis via salvage pathway; dTMP from thymine: step 1/2. In terms of biological role, catalyzes the reversible phosphorolysis of thymidine. The produced molecules are then utilized as carbon and energy sources or in the rescue of pyrimidine bases for nucleotide synthesis. The sequence is that of Thymidine phosphorylase (Tymp) from Rattus norvegicus (Rat).